Consider the following 254-residue polypeptide: Cell wall biogenesis protein NCW2 (254 aa).

The signal sequence occupies residues 1-17; that stretch reads MKACSILFTTLITLAAA. Disordered stretches follow at residues 19–57, 111–143, and 167–191; these read KDSG…SAST, TSTA…DGPV, and ATTD…SSTK. Low complexity predominate over residues 27–42; the sequence is QNSEDSSQKESSNSQE. Positions 43–57 are enriched in polar residues; it reads ITPTTTKEAQESAST. A compositionally biased stretch (low complexity) spans 111–139; that stretch reads TSTASVQPTGETSSGITNSASSSTTSTST. Asn-229 carries an N-linked (GlcNAc...) asparagine glycan. Asn-232 carries GPI-anchor amidated asparagine lipidation. A propeptide spans 233-254 (removed in mature form); it reads GAFAGTHIAYGAGAFAVGALLL.

The protein localises to the cell membrane. Functionally, cell wall biogenesis protein that participates in the organization of the beta-glucan assembly. Involved in the mechanism responsible for cell tolerance to polyhexamethylene biguanide (PHMB), an antifungal agent. The chain is Cell wall biogenesis protein NCW2 from Saccharomyces cerevisiae (strain ATCC 204508 / S288c) (Baker's yeast).